Here is a 167-residue protein sequence, read N- to C-terminus: LIM domain transcription factor LMO4.1 (167 aa).

Residues 1-17 (MVNNRVTESTTTAVSSN) are compositionally biased toward polar residues. The interval 1 to 20 (MVNNRVTESTTTAVSSNGGP) is disordered. 2 LIM zinc-binding domains span residues 22–84 (KACA…LFGS) and 86–148 (GACS…GLLS).

Functionally, acts as a positive cofactor of GATA transcription factors to establish the identity of the ventral mesoderm during gastrulation. Down-regulation in the dorsal mesoderm is necessary for the proper formation of this territory since, when present, lmo4 may bind ldb1 and restrict the availability of this cofactor for Spemman organizer transcription factors. At neurula stages, suppresses primary neuron differentiation and modulates gene expression at the Isthmic Organizer of the midbrain-hindbrain boundary. This Xenopus tropicalis (Western clawed frog) protein is LIM domain transcription factor LMO4.1 (lmo4.1).